Consider the following 662-residue polypeptide: MPMSSSGYSRTTTHFKMMMATKGKRPLRHLTATDKIDAIQRIHDGESKASVARDIGVPESTLRGWCKNEEKLRYMSRQSAENADKLTSEATAAALTAVAAAELFNGPPEKRMKLEQGLFGKKYDESFYKSPRGMNGLDLSGGGDKGLGVSGGDIIMNGLHGADFSAFAKTAAEISAMGKAKDRYGADLSRNGGGDPGKAELSMAAISPLTSLSHLSGMGGLAQSPLALSFNEIATNLNLIAQLNNNHNLATMSNLGGLTAAQSLRNARPKGNASQSPRASLPDSSGSGGGTPGDKSTPSLTVRNLAKLQQKTSSELQNNGRDPNAPVDEALWYWLKSQQAMLGLNNLYSQMPRPSSPQQPQSTPPTTTTTQQQQPQSSTPPTATPPIVSTPQPTPPSSAPSLTPEDTKNSSWFWQWYKTFGASLMPGDKSCNNNSINATNANNSKYENILYSQLTKGQSPPTTADSLNNNAQPINLNISSNGVVDHLKSEPEDLTTTTNPSMLPPEDHTRFNPSPSTSIKSELKPEVDEDEDEDDEVAKCNGANTAVKQVLDNLLYSQSSPGPVATAPSPLSPSSSTHENGHATPTPLADDLKSTCSEDTDLKSSAEAVEHGEKFLKWLEACSDPNVTAMQVMQFKYLLNSIKLSAERQNGGGEERTRRRRK.

The 52-residue stretch at 21–72 folds into the HTH psq-type domain; sequence TKGKRPLRHLTATDKIDAIQRIHDGESKASVARDIGVPESTLRGWCKNEEKL. Residues 48–68 constitute a DNA-binding region (H-T-H motif); that stretch reads KASVARDIGVPESTLRGWCKN. Disordered stretches follow at residues 265–299, 348–407, 491–537, and 558–596; these read RNAR…STPS, YSQM…PEDT, PEDL…DDEV, and QSSP…KSTC. Positions 349–391 are enriched in low complexity; sequence SQMPRPSSPQQPQSTPPTTTTTQQQQPQSSTPPTATPPIVSTP. The span at 511-520 shows a compositional bias: polar residues; sequence FNPSPSTSIK. Positions 527-536 are enriched in acidic residues; the sequence is VDEDEDEDDE.

In terms of assembly, homomers. Interacts with itself, danr, ey and dac to form a complex (or complexes) containing the RD factors.

It localises to the nucleus. Its function is as follows. Probable transcription factor with a role in the retinal determination (RD) network. Contributes to differentiation of antenna-specific characteristics. The protein is Protein distal antenna of Culex quinquefasciatus (Southern house mosquito).